Consider the following 94-residue polypeptide: Cell division protein FtsB (94 aa).

Topologically, residues 1–3 are cytoplasmic; that stretch reads MRA. A helical membrane pass occupies residues 4 to 21; sequence FAVLLIIALGWLQYTLWF. Residues 22–94 are Periplasmic-facing; it reads GKNGMEDYAQ…YRIIDENSEE (73 aa). The stretch at 40–60 forms a coiled coil; sequence EEVNQGLRNRNGQMFAEIDDL.

This sequence belongs to the FtsB family. Part of a complex composed of FtsB, FtsL and FtsQ.

It is found in the cell inner membrane. Its function is as follows. Essential cell division protein. May link together the upstream cell division proteins, which are predominantly cytoplasmic, with the downstream cell division proteins, which are predominantly periplasmic. The protein is Cell division protein FtsB of Aliivibrio salmonicida (strain LFI1238) (Vibrio salmonicida (strain LFI1238)).